The chain runs to 427 residues: Glutamyl-tRNA reductase (427 aa).

Substrate is bound by residues 49-52 (TCNR), S101, 106-108 (EPQ), and Q112. C50 functions as the Nucleophile in the catalytic mechanism. 181–186 (GAGETI) provides a ligand contact to NADP(+). The disordered stretch occupies residues 407–427 (FPATPGYRHPPVRPDDADPAP). Positions 418-427 (VRPDDADPAP) are enriched in basic and acidic residues.

The protein belongs to the glutamyl-tRNA reductase family. As to quaternary structure, homodimer.

It catalyses the reaction (S)-4-amino-5-oxopentanoate + tRNA(Glu) + NADP(+) = L-glutamyl-tRNA(Glu) + NADPH + H(+). Its pathway is porphyrin-containing compound metabolism; protoporphyrin-IX biosynthesis; 5-aminolevulinate from L-glutamyl-tRNA(Glu): step 1/2. In terms of biological role, catalyzes the NADPH-dependent reduction of glutamyl-tRNA(Glu) to glutamate 1-semialdehyde (GSA). The protein is Glutamyl-tRNA reductase of Stenotrophomonas maltophilia (strain R551-3).